We begin with the raw amino-acid sequence, 508 residues long: Aromatase (508 aa).

Cysteine 437 contacts heme.

Belongs to the cytochrome P450 family. Heme is required as a cofactor.

The protein localises to the membrane. The enzyme catalyses testosterone + 3 reduced [NADPH--hemoprotein reductase] + 3 O2 = 17beta-estradiol + formate + 3 oxidized [NADPH--hemoprotein reductase] + 4 H2O + 4 H(+). It carries out the reaction androst-4-ene-3,17-dione + 3 reduced [NADPH--hemoprotein reductase] + 3 O2 = estrone + formate + 3 oxidized [NADPH--hemoprotein reductase] + 4 H2O + 4 H(+). Functionally, catalyzes the formation of aromatic C18 estrogens from C19 androgens. This Rattus norvegicus (Rat) protein is Aromatase (Cyp19a1).